The sequence spans 163 residues: Glutathione peroxidase 2 (163 aa).

Cysteine 36 is a catalytic residue.

This sequence belongs to the glutathione peroxidase family.

It localises to the cytoplasm. It carries out the reaction 2 glutathione + H2O2 = glutathione disulfide + 2 H2O. Its function is as follows. May constitute a glutathione peroxidase-like protective system against oxidative stresses. The polypeptide is Glutathione peroxidase 2 (gpx-2) (Caenorhabditis elegans).